A 104-amino-acid polypeptide reads, in one-letter code: Zinc-containing ferredoxin-2 (104 aa).

The tract at residues 2-37 (GIDPNYRQNRQVVGEHEGHKIYGPVEPPGKLGIHGT) is N-terminal extension. Positions 17, 20, and 35 each coordinate Zn(2+). 4Fe-4S ferredoxin-type domains follow at residues 38-66 (IVGV…WFDT) and 75-104 (KADP…VKPP). [3Fe-4S] cluster-binding residues include Cys-46 and Cys-52. Cys-56 contacts [4Fe-4S] cluster. Residue Asp-77 coordinates Zn(2+). [4Fe-4S] cluster is bound by residues Cys-84, Cys-87, and Cys-90. Cys-94 contacts [3Fe-4S] cluster.

[3Fe-4S] cluster is required as a cofactor. The cofactor is [4Fe-4S] cluster. Zn(2+) serves as cofactor.

In terms of biological role, ferredoxins are iron-sulfur proteins that transfer electrons in a wide variety of metabolic reactions. This is Zinc-containing ferredoxin-2 (zfx2) from Sulfurisphaera tokodaii (strain DSM 16993 / JCM 10545 / NBRC 100140 / 7) (Sulfolobus tokodaii).